The chain runs to 450 residues: Phosphoglucosamine mutase (450 aa).

S102 functions as the Phosphoserine intermediate in the catalytic mechanism. The Mg(2+) site is built by S102, D243, D245, and D247. Phosphoserine is present on S102.

It belongs to the phosphohexose mutase family. Requires Mg(2+) as cofactor. In terms of processing, activated by phosphorylation.

It carries out the reaction alpha-D-glucosamine 1-phosphate = D-glucosamine 6-phosphate. Functionally, catalyzes the conversion of glucosamine-6-phosphate to glucosamine-1-phosphate. The protein is Phosphoglucosamine mutase of Rhizobium etli (strain ATCC 51251 / DSM 11541 / JCM 21823 / NBRC 15573 / CFN 42).